The sequence spans 299 residues: 4-hydroxy-tetrahydrodipicolinate synthase (299 aa).

T44 provides a ligand contact to pyruvate. The Proton donor/acceptor role is filled by Y133. Catalysis depends on K162, which acts as the Schiff-base intermediate with substrate. A pyruvate-binding site is contributed by I204.

The protein belongs to the DapA family. As to quaternary structure, homotetramer; dimer of dimers.

It localises to the cytoplasm. The catalysed reaction is L-aspartate 4-semialdehyde + pyruvate = (2S,4S)-4-hydroxy-2,3,4,5-tetrahydrodipicolinate + H2O + H(+). The protein operates within amino-acid biosynthesis; L-lysine biosynthesis via DAP pathway; (S)-tetrahydrodipicolinate from L-aspartate: step 3/4. Its function is as follows. Catalyzes the condensation of (S)-aspartate-beta-semialdehyde [(S)-ASA] and pyruvate to 4-hydroxy-tetrahydrodipicolinate (HTPA). This Thermus thermophilus (strain ATCC BAA-163 / DSM 7039 / HB27) protein is 4-hydroxy-tetrahydrodipicolinate synthase.